The sequence spans 234 residues: Leucyl/phenylalanyl-tRNA--protein transferase (234 aa).

It belongs to the L/F-transferase family.

The protein resides in the cytoplasm. The enzyme catalyses N-terminal L-lysyl-[protein] + L-leucyl-tRNA(Leu) = N-terminal L-leucyl-L-lysyl-[protein] + tRNA(Leu) + H(+). The catalysed reaction is N-terminal L-arginyl-[protein] + L-leucyl-tRNA(Leu) = N-terminal L-leucyl-L-arginyl-[protein] + tRNA(Leu) + H(+). It carries out the reaction L-phenylalanyl-tRNA(Phe) + an N-terminal L-alpha-aminoacyl-[protein] = an N-terminal L-phenylalanyl-L-alpha-aminoacyl-[protein] + tRNA(Phe). Its function is as follows. Functions in the N-end rule pathway of protein degradation where it conjugates Leu, Phe and, less efficiently, Met from aminoacyl-tRNAs to the N-termini of proteins containing an N-terminal arginine or lysine. The sequence is that of Leucyl/phenylalanyl-tRNA--protein transferase from Shigella flexneri serotype 5b (strain 8401).